The sequence spans 364 residues: Pre-small/secreted glycoprotein (364 aa).

Positions 1–32 are cleaved as a signal peptide; it reads MGVTGILQLPRDRFKRTSFFLWVIILFQRTFS. Residue asparagine 40 is glycosylated (N-linked (GlcNAc...) asparagine; by host). 2 disulfides stabilise this stretch: cysteine 108/cysteine 135 and cysteine 121/cysteine 147. N-linked (GlcNAc...) asparagine; by host glycosylation is found at asparagine 204, asparagine 228, asparagine 238, asparagine 257, and asparagine 268.

Belongs to the filoviruses glycoprotein family. In terms of assembly, homodimer; disulfide-linked. The homodimers are linked by two disulfide bonds in a parallel orientation. As to quaternary structure, monomer. This precursor is processed into mature sGP and delta-peptide by host furin or furin-like proteases. The cleavage site corresponds to the furin optimal cleavage sequence [KR]-X-[KR]-R. In terms of processing, N-glycosylated. Post-translationally, O-glycosylated.

Its subcellular location is the secreted. In terms of biological role, seems to possess an anti-inflammatory activity as it can reverse the barrier-decreasing effects of TNF alpha. Might therefore contribute to the lack of inflammatory reaction seen during infection in spite the of extensive necrosis and massive virus production. Does not seem to be involved in activation of primary macrophages. Does not seem to interact specifically with neutrophils. Its function is as follows. Viroporin that permeabilizes mammalian cell plasma membranes. It acts by altering permeation of ionic compounds and small molecules. This activity may lead to viral enterotoxic activity. This chain is Pre-small/secreted glycoprotein (GP), found in Epomops franqueti (Franquet's epauletted fruit bat).